Consider the following 66-residue polypeptide: Beta-toxin Cb1 (66 aa).

Residues 1–66 (KEGYIVNHST…VWPLPKKTCN (66 aa)) enclose the LCN-type CS-alpha/beta domain. Disulfide bonds link C12/C65, C16/C41, C25/C46, and C29/C48.

Belongs to the long (4 C-C) scorpion toxin superfamily. Sodium channel inhibitor family. Beta subfamily. Expressed by the venom gland.

The protein localises to the secreted. Its activity is regulated as follows. Inhibited by human antibodies scFvs 10FG2 and LR. Functionally, beta toxins bind voltage-independently at site-4 of sodium channels (Nav) and reduces peak current and shifts the voltage of activation toward more negative potentials thereby affecting sodium channel activation and promoting spontaneous and repetitive firing. Has an inhibitory effect on voltage-gated sodium channel hNav1.6/SCN8A, affecting both the activation and inactivation processes. This toxin is active against mammals and lethal to mice. The polypeptide is Beta-toxin Cb1 (Centruroides baergi (Scorpion)).